A 396-amino-acid chain; its full sequence is Elongation factor Tu (396 aa).

Residues 11–205 form the tr-type G domain; that stretch reads KPHVNIGTIG…TIDEYIPTPV (195 aa). The G1 stretch occupies residues 20–27; that stretch reads GHVDHGKT. Position 20 to 27 (20 to 27) interacts with GTP; that stretch reads GHVDHGKT. Thr27 is a Mg(2+) binding site. The segment at 61-65 is G2; sequence GITIN. Positions 82-85 are G3; that stretch reads DAPG. Residues 82–86 and 137–140 contribute to the GTP site; these read DAPGH and NKTD. Residues 137–140 are G4; sequence NKTD. Positions 175-177 are G5; the sequence is SAL.

This sequence belongs to the TRAFAC class translation factor GTPase superfamily. Classic translation factor GTPase family. EF-Tu/EF-1A subfamily. In terms of assembly, monomer.

Its subcellular location is the cytoplasm. The catalysed reaction is GTP + H2O = GDP + phosphate + H(+). In terms of biological role, GTP hydrolase that promotes the GTP-dependent binding of aminoacyl-tRNA to the A-site of ribosomes during protein biosynthesis. This Lacticaseibacillus casei (strain BL23) (Lactobacillus casei) protein is Elongation factor Tu.